Here is a 1126-residue protein sequence, read N- to C-terminus: Translation initiation factor IF-2 (1126 aa).

Residues 63-519 (LSINKPSIKK…TTRQRQKRRA (457 aa)) form a disordered region. A compositionally biased stretch (basic and acidic residues) spans 70–83 (IKKDNFKQNKEDKS). Positions 93–111 (PLKNNSNKKPLLIKPLNKP) are enriched in low complexity. Over residues 116–151 (KISNQLQNPNKPNIVNSSQSRANLTNTNSKPSQNFN) the composition is skewed to polar residues. The segment covering 161 to 171 (TPPPIKSPAKP) has biased composition (pro residues). Over residues 181 to 195 (NINNNVKSSESSQNI) the composition is skewed to polar residues. Low complexity-rich tracts occupy residues 211 to 224 (NTNKPKTKNFNNRK) and 240 to 252 (IINPNKQNNNKQN). Residues 254 to 264 (AFKQTASNRPG) show a composition bias toward polar residues. Composition is skewed to low complexity over residues 291–315 (NRQGNPNRPGSPNRPGMPNRPGLRN) and 327–349 (NRQGNPNRPGSPNGPGMPNNRPG). Residues 429 to 443 (GKTDWDDSAKLEALR) show a composition bias toward basic and acidic residues. Residues 501-517 (KQFKKKKKETTRQRQKR) are compositionally biased toward basic residues. The tr-type G domain occupies 618 to 790 (RRPPVITVMG…ILLVSDVEDL (173 aa)). Residues 627–634 (GHVDHGKT) are G1. 627-634 (GHVDHGKT) is a binding site for GTP. Positions 652–656 (GITQH) are G2. Positions 677-680 (DTPG) are G3. Residues 677–681 (DTPGH) and 731–734 (NKID) contribute to the GTP site. The tract at residues 731–734 (NKID) is G4. Positions 767–769 (SAI) are G5.

Belongs to the TRAFAC class translation factor GTPase superfamily. Classic translation factor GTPase family. IF-2 subfamily.

It localises to the cytoplasm. Its function is as follows. One of the essential components for the initiation of protein synthesis. Protects formylmethionyl-tRNA from spontaneous hydrolysis and promotes its binding to the 30S ribosomal subunits. Also involved in the hydrolysis of GTP during the formation of the 70S ribosomal complex. This chain is Translation initiation factor IF-2, found in Prochlorococcus marinus (strain AS9601).